Reading from the N-terminus, the 156-residue chain is Small ribosomal subunit protein uS7 (156 aa).

The protein belongs to the universal ribosomal protein uS7 family. As to quaternary structure, part of the 30S ribosomal subunit. Contacts proteins S9 and S11.

In terms of biological role, one of the primary rRNA binding proteins, it binds directly to 16S rRNA where it nucleates assembly of the head domain of the 30S subunit. Is located at the subunit interface close to the decoding center, probably blocks exit of the E-site tRNA. The chain is Small ribosomal subunit protein uS7 from Mycoplasma mobile (strain ATCC 43663 / 163K / NCTC 11711) (Mesomycoplasma mobile).